Consider the following 285-residue polypeptide: Small ribosomal subunit protein uS2 (285 aa).

The tract at residues 228 to 285 (RAGLSADKDAKPEAGAGEPLAEWEQELLSQAAPAAEAEAAPAAEAEAAPAAEAPATEA) is disordered. Low complexity predominate over residues 258-285 (AAPAAEAEAAPAAEAEAAPAAEAPATEA).

This sequence belongs to the universal ribosomal protein uS2 family.

The polypeptide is Small ribosomal subunit protein uS2 (Rhodococcus erythropolis (strain PR4 / NBRC 100887)).